A 283-amino-acid chain; its full sequence is tRNA-cytidine(32) 2-sulfurtransferase (283 aa).

The short motif at 32-37 (SGGKDS) is the PP-loop motif element. [4Fe-4S] cluster contacts are provided by Cys107, Cys110, and Cys198.

The protein belongs to the TtcA family. As to quaternary structure, homodimer. The cofactor is Mg(2+). Requires [4Fe-4S] cluster as cofactor.

It is found in the cytoplasm. It catalyses the reaction cytidine(32) in tRNA + S-sulfanyl-L-cysteinyl-[cysteine desulfurase] + AH2 + ATP = 2-thiocytidine(32) in tRNA + L-cysteinyl-[cysteine desulfurase] + A + AMP + diphosphate + H(+). It participates in tRNA modification. Functionally, catalyzes the ATP-dependent 2-thiolation of cytidine in position 32 of tRNA, to form 2-thiocytidine (s(2)C32). The sulfur atoms are provided by the cysteine/cysteine desulfurase (IscS) system. The protein is tRNA-cytidine(32) 2-sulfurtransferase of Sorangium cellulosum (strain So ce56) (Polyangium cellulosum (strain So ce56)).